We begin with the raw amino-acid sequence, 237 residues long: NAD(P)H-quinone oxidoreductase subunit K (237 aa).

Positions 52, 53, 117, and 148 each coordinate [4Fe-4S] cluster.

This sequence belongs to the complex I 20 kDa subunit family. As to quaternary structure, NDH-1 can be composed of about 15 different subunits; different subcomplexes with different compositions have been identified which probably have different functions. [4Fe-4S] cluster serves as cofactor.

The protein resides in the cellular thylakoid membrane. It catalyses the reaction a plastoquinone + NADH + (n+1) H(+)(in) = a plastoquinol + NAD(+) + n H(+)(out). It carries out the reaction a plastoquinone + NADPH + (n+1) H(+)(in) = a plastoquinol + NADP(+) + n H(+)(out). Functionally, NDH-1 shuttles electrons from an unknown electron donor, via FMN and iron-sulfur (Fe-S) centers, to quinones in the respiratory and/or the photosynthetic chain. The immediate electron acceptor for the enzyme in this species is believed to be plastoquinone. Couples the redox reaction to proton translocation, and thus conserves the redox energy in a proton gradient. Cyanobacterial NDH-1 also plays a role in inorganic carbon-concentration. The sequence is that of NAD(P)H-quinone oxidoreductase subunit K from Thermosynechococcus vestitus (strain NIES-2133 / IAM M-273 / BP-1).